The chain runs to 288 residues: Intermediate transcription factor 3 small subunit (288 aa).

This sequence belongs to the orthopoxvirus OPG134 family. Heterodimer of a 45 kDa (A23R) and a 32 kDa (A8R) subunit to form the virus intermediate transcription factor (VITF)-3.

Acts with RNA polymerase to initiate transcription from intermediate gene promoters. The protein is Intermediate transcription factor 3 small subunit (OPG134) of Homo sapiens (Human).